Here is an 886-residue protein sequence, read N- to C-terminus: DNA mismatch repair protein MutS (886 aa).

ATP is bound at residue Gly-627 to Ser-634. Residues Val-834–Asp-857 are disordered.

Belongs to the DNA mismatch repair MutS family.

In terms of biological role, this protein is involved in the repair of mismatches in DNA. It is possible that it carries out the mismatch recognition step. This protein has a weak ATPase activity. This chain is DNA mismatch repair protein MutS, found in Burkholderia vietnamiensis (strain G4 / LMG 22486) (Burkholderia cepacia (strain R1808)).